A 251-amino-acid chain; its full sequence is 5'-nucleotidase SurE (251 aa).

A divalent metal cation is bound by residues Asp8, Asp9, Ser39, and Asn95.

It belongs to the SurE nucleotidase family. The cofactor is a divalent metal cation.

The protein localises to the cytoplasm. It catalyses the reaction a ribonucleoside 5'-phosphate + H2O = a ribonucleoside + phosphate. In terms of biological role, nucleotidase that shows phosphatase activity on nucleoside 5'-monophosphates. The chain is 5'-nucleotidase SurE from Clostridium botulinum (strain Alaska E43 / Type E3).